The following is a 499-amino-acid chain: Putative sperm motility kinase W (499 aa).

The 249-residue stretch at 14–262 (YKVLFTLGHG…IEDIERHPWV (249 aa)) folds into the Protein kinase domain. ATP contacts are provided by residues 20 to 28 (LGHGSFGTV) and Lys-43. Asp-133 acts as the Proton acceptor in catalysis. Positions 274-314 (DPDYNIIEMLCGMGFDANEILESLQRKKYNESMGAYLILKA) constitute a UBA domain.

It belongs to the protein kinase superfamily. CAMK Ser/Thr protein kinase family. Smok subfamily.

It carries out the reaction L-seryl-[protein] + ATP = O-phospho-L-seryl-[protein] + ADP + H(+). The catalysed reaction is L-threonyl-[protein] + ATP = O-phospho-L-threonyl-[protein] + ADP + H(+). May play a role in sperm motility, especially in the regulation of flagellar function. The protein is Putative sperm motility kinase W of Mus musculus (Mouse).